We begin with the raw amino-acid sequence, 730 residues long: Cyclin-dependent kinase 12 (730 aa).

Disordered regions lie at residues 1 to 230 and 246 to 283; these read MEIS…APFS and FSLS…IATR. Positions 9–21 are enriched in basic and acidic residues; that stretch reads THERDRKGSYGHR. Over residues 57 to 67 the composition is skewed to polar residues; it reads SISPQYKQRNW. Over residues 75–94 the composition is skewed to basic and acidic residues; the sequence is GRDRGRNDFSYRKKGKDYNK. Basic residues-rich tracts occupy residues 95–122 and 151–163; these read RRDK…KRRN and KSKK…RKHS. Positions 194-203 are enriched in low complexity; it reads FNINPFQPMF. A compositionally biased stretch (pro residues) spans 204–230; that stretch reads SQPPPPPLPPNSQFMTPPPRPPPAPFS. In terms of domain architecture, Protein kinase spans 313 to 605; that stretch reads MLDQIGEGTY…AKEALNHPWI (293 aa). ATP-binding positions include 317-325, Lys340, and 398-403; these read IGEGTYGQV and EYVDHD. The active-site Proton acceptor is Asp444. Residues 623 to 730 form a disordered region; that stretch reads DCHEMWSKKQ…QSQYQSVFFK (108 aa). His625 contributes to the ATP binding site. Residues 676–688 are compositionally biased toward basic residues; that stretch reads NHHHHHHHSHHHA. A compositionally biased stretch (polar residues) spans 714–730; sequence NNHQPVPQSQYQSVFFK.

Belongs to the protein kinase superfamily. CMGC Ser/Thr protein kinase family. CDC2/CDKX subfamily.

It localises to the nucleus. The catalysed reaction is [DNA-directed RNA polymerase] + ATP = phospho-[DNA-directed RNA polymerase] + ADP + H(+). It catalyses the reaction L-seryl-[protein] + ATP = O-phospho-L-seryl-[protein] + ADP + H(+). It carries out the reaction L-threonyl-[protein] + ATP = O-phospho-L-threonyl-[protein] + ADP + H(+). In terms of biological role, cyclin-dependent kinase which displays CTD kinase activity: hyperphosphorylates 'Ser-2' in the C-terminal heptapeptide repeat domain (CTD) of the largest RNA polymerase II subunit, thereby acting as a key regulator of transcription elongation. Required for normal reproduction. The chain is Cyclin-dependent kinase 12 from Caenorhabditis elegans.